We begin with the raw amino-acid sequence, 97 residues long: HssA/B-like protein 44 (97 aa).

Disordered regions lie at residues 1–22 and 62–97; these read MTLFSSISSISSSISSSKSSIA and ASTSSGGRGGRPGRGHGGPHGHGRGGSGSGSSCGCN. Residues 72-84 are compositionally biased toward basic residues; the sequence is RPGRGHGGPHGHG. Residues 85–97 are compositionally biased toward gly residues; that stretch reads RGGSGSGSSCGCN.

This sequence belongs to the hssA/B family.

The chain is HssA/B-like protein 44 (hssl44) from Dictyostelium discoideum (Social amoeba).